The sequence spans 237 residues: Large ribosomal subunit protein uL3 (237 aa).

2 disordered regions span residues 133 to 155 (ASHG…DPGK) and 213 to 237 (PENA…EGAE). A compositionally biased stretch (polar residues) spans 135 to 150 (HGNSITHRSHGSTGQR). Residue Q151 is modified to N5-methylglutamine. Residues 220–237 (AGLRAGAKAEAAATEGAE) are compositionally biased toward low complexity.

The protein belongs to the universal ribosomal protein uL3 family. In terms of assembly, part of the 50S ribosomal subunit. Forms a cluster with proteins L14 and L19. Methylated by PrmB.

One of the primary rRNA binding proteins, it binds directly near the 3'-end of the 23S rRNA, where it nucleates assembly of the 50S subunit. This Brucella suis biovar 1 (strain 1330) protein is Large ribosomal subunit protein uL3.